A 358-amino-acid polypeptide reads, in one-letter code: Peptide chain release factor 1 (358 aa).

Q233 carries the N5-methylglutamine modification.

It belongs to the prokaryotic/mitochondrial release factor family. Post-translationally, methylated by PrmC. Methylation increases the termination efficiency of RF1.

Its subcellular location is the cytoplasm. Functionally, peptide chain release factor 1 directs the termination of translation in response to the peptide chain termination codons UAG and UAA. The protein is Peptide chain release factor 1 of Brevibacillus brevis (strain 47 / JCM 6285 / NBRC 100599).